Consider the following 509-residue polypeptide: Dihydrolipoyl dehydrogenase, mitochondrial (509 aa).

The N-terminal 35 residues, Met1–Tyr35, are a transit peptide targeting the mitochondrion. The residue at position 66 (Lys66) is an N6-acetyllysine; alternate. Lys66 carries the post-translational modification N6-succinyllysine; alternate. FAD-binding positions include Glu71–Cys80 and Lys89. Cys80 and Cys85 are joined by a disulfide. N6-acetyllysine; alternate is present on residues Lys104, Lys122, Lys132, and Lys143. N6-succinyllysine; alternate occurs at positions 104, 122, 132, and 143. An FAD-binding site is contributed by Gly154. 2 positions are modified to N6-succinyllysine: Lys159 and Lys166. Thr183–Ser185 contributes to the FAD binding site. Residues Gly220–Glu227 and Glu243 contribute to the NAD(+) site. Lys273 and Lys277 each carry N6-succinyllysine. Val278 contacts NAD(+). A phosphoserine mark is found at Ser285 and Ser297. Gly314 lines the NAD(+) pocket. Lys346 bears the N6-acetyllysine mark. Residues Asp355 and Met361–His364 contribute to the FAD site. At Lys410 the chain carries N6-acetyllysine; alternate. N6-succinyllysine; alternate is present on Lys410. Lys417 and Lys420 each carry N6-acetyllysine. Lys430 bears the N6-succinyllysine mark. Catalysis depends on His487, which acts as the Proton acceptor. Phosphoserine is present on Ser502. N6-acetyllysine; alternate is present on Lys505. Lys505 carries the N6-succinyllysine; alternate modification.

Belongs to the class-I pyridine nucleotide-disulfide oxidoreductase family. Homodimer. Part of the multimeric pyruvate dehydrogenase complex that contains multiple copies of pyruvate dehydrogenase (subunits PDHA (PDHA1 or PDHA2) and PDHB, E1), dihydrolipoamide acetyltransferase (DLAT, E2) and lipoamide dehydrogenase (DLD, E3). These subunits are bound to an inner core composed of about 48 DLAT and 12 PDHX molecules (by non covalent bonds). The 2-oxoglutarate dehydrogenase complex is composed of OGDH (2-oxoglutarate dehydrogenase; E1), DLST (dihydrolipoamide succinyltransferase; E2), DLD (dihydrolipoamide dehydrogenase; E3) and the assembly factor KGD4. It contains multiple copies of the three enzymatic components (E1, E2 and E3). In the nucleus, the 2-oxoglutarate dehydrogenase complex associates with KAT2A. Interacts with PDHX. FAD serves as cofactor. Tyrosine phosphorylated.

The protein resides in the mitochondrion matrix. It is found in the nucleus. It localises to the cell projection. Its subcellular location is the cilium. The protein localises to the flagellum. The protein resides in the cytoplasmic vesicle. It is found in the secretory vesicle. It localises to the acrosome. It carries out the reaction N(6)-[(R)-dihydrolipoyl]-L-lysyl-[protein] + NAD(+) = N(6)-[(R)-lipoyl]-L-lysyl-[protein] + NADH + H(+). Disruption of native heterodimer state inhibits primary dihydrolipoamide dehydrogenase activity and induces serine protease activity. Functionally, lipoamide dehydrogenase is a component of the glycine cleavage system as well as an E3 component of three alpha-ketoacid dehydrogenase complexes (pyruvate-, alpha-ketoglutarate-, and branched-chain amino acid-dehydrogenase complex). The 2-oxoglutarate dehydrogenase complex is mainly active in the mitochondrion. A fraction of the 2-oxoglutarate dehydrogenase complex also localizes in the nucleus and is required for lysine succinylation of histones: associates with KAT2A on chromatin and provides succinyl-CoA to histone succinyltransferase KAT2A. In monomeric form may have additional moonlighting function as serine protease. Involved in the hyperactivation of spermatazoa during capacitation and in the spermatazoal acrosome reaction. This is Dihydrolipoyl dehydrogenase, mitochondrial (DLD) from Homo sapiens (Human).